The chain runs to 323 residues: Sphingolipid delta(4)-desaturase DES1 (323 aa).

2 consecutive transmembrane segments (helical) span residues Tyr-41–Val-61 and Trp-68–Ile-88. The short motif at His-89–His-93 is the Histidine box-1 element. Residues Ala-102 to Ile-122 form a helical membrane-spanning segment. The Histidine box-2 motif lies at His-128 to His-132. 3 helical membrane-spanning segments follow: residues Lys-159–Pro-179, Leu-185–Gly-205, and Ile-209–Phe-229. The Histidine box-3 signature appears at His-259–His-263.

This sequence belongs to the fatty acid desaturase type 1 family. DEGS subfamily. In terms of assembly, interacts with RLBP1; the interaction increases synthesis of chromophore-precursors by DEGS1. As to expression, expressed in retina and retinal pigment epithelium by Mueller cells (at protein level).

The protein resides in the endoplasmic reticulum membrane. The enzyme catalyses an N-acylsphinganine + 2 Fe(II)-[cytochrome b5] + O2 + 2 H(+) = an N-acylsphing-4-enine + 2 Fe(III)-[cytochrome b5] + 2 H2O. The catalysed reaction is all-trans-retinol = 11-cis-retinol. It catalyses the reaction all-trans-retinol = 9-cis-retinol. It carries out the reaction all-trans-retinol = 13-cis-retinol. The enzyme catalyses 11-cis-retinol = 13-cis-retinol. The catalysed reaction is 11-cis-retinol = 9-cis-retinol. Functionally, has sphingolipid-delta-4-desaturase activity. Converts D-erythro-sphinganine to D-erythro-sphingosine (E-sphing-4-enine). Catalyzes the equilibrium isomerization of retinols. This chain is Sphingolipid delta(4)-desaturase DES1 (DEGS1), found in Gallus gallus (Chicken).